Here is a 325-residue protein sequence, read N- to C-terminus: Quinolinate synthase (325 aa).

Residues H41 and S58 each contribute to the iminosuccinate site. C103 contributes to the [4Fe-4S] cluster binding site. Iminosuccinate is bound by residues 129-131 (YIN) and S146. C189 provides a ligand contact to [4Fe-4S] cluster. Residues 215–217 (HPE) and T232 contribute to the iminosuccinate site. [4Fe-4S] cluster is bound at residue C282.

The protein belongs to the quinolinate synthase family. Type 2 subfamily. The cofactor is [4Fe-4S] cluster.

The protein resides in the cytoplasm. It catalyses the reaction iminosuccinate + dihydroxyacetone phosphate = quinolinate + phosphate + 2 H2O + H(+). The protein operates within cofactor biosynthesis; NAD(+) biosynthesis; quinolinate from iminoaspartate: step 1/1. In terms of biological role, catalyzes the condensation of iminoaspartate with dihydroxyacetone phosphate to form quinolinate. This chain is Quinolinate synthase, found in Rippkaea orientalis (strain PCC 8801 / RF-1) (Cyanothece sp. (strain PCC 8801)).